Consider the following 150-residue polypeptide: CASP-like protein 2 (150 aa).

Topologically, residues 1 to 17 are cytoplasmic; that stretch reads MKPEAGDGRSGWRWVAT. A helical membrane pass occupies residues 18-38; the sequence is FDLILRLAAIVATSTAVLAAM. Topologically, residues 39 to 41 are extracellular; sequence GKT. A helical membrane pass occupies residues 42–62; that stretch reads FVVVVNGVACFYLLMSLPVSI. Residues 63-82 lie on the Cytoplasmic side of the membrane; sequence FNIMRPGACPANRAVLTALD. Residues 83–103 form a helical membrane-spanning segment; sequence MVTVALVTAGALVAGILYLVH. The Extracellular portion of the chain corresponds to 104–121; the sequence is KAGDTHADWFSIWSQLDS. Residues 122 to 142 traverse the membrane as a helical segment; that stretch reads LSYLAVLALILHVLLSGSILY. Residues 143–150 lie on the Cytoplasmic side of the membrane; that stretch reads KQALNIMF.

The protein belongs to the Casparian strip membrane proteins (CASP) family. Homodimer and heterodimers.

The protein localises to the cell membrane. The protein is CASP-like protein 2 of Picea sitchensis (Sitka spruce).